Consider the following 53-residue polypeptide: IgW transmembrane form Tm1T3/Tm6T3/Tm3C4 (53 aa).

The interval 1–25 is disordered; it reads VQAVPPDVKGEEGKEEVEDMDGDDN. Residues 13–24 show a composition bias toward acidic residues; sequence GKEEVEDMDGDD. The chain crosses the membrane as a helical span at residues 29-49; it reads VAAFAILFILSFLYSTFVTVV.

As to expression, expressed in the spleen, pancreas, peripheral blood lymphocytes and at low levels in the epigonal organ.

Its subcellular location is the membrane. This chain is IgW transmembrane form Tm1T3/Tm6T3/Tm3C4, found in Ginglymostoma cirratum (Nurse shark).